The primary structure comprises 488 residues: Inositol 1,3,4-trisphosphate 5/6-kinase 4 (488 aa).

The 1D-myo-inositol 1,3,4-trisphosphate site is built by K208 and K224. An ATP-grasp domain is found at 246 to 488 (NACAIVDPIR…RFDQHVQEKH (243 aa)). Positions 263 and 315 each coordinate ATP. H326 and K360 together coordinate 1D-myo-inositol 1,3,4-trisphosphate. ATP-binding positions include 349 to 360 (QEYVDHSSRIFK), S375, and S398. Mg(2+) is bound by residues D439, D453, and N455. N455 and S459 together coordinate 1D-myo-inositol 1,3,4-trisphosphate.

Belongs to the ITPK1 family. In terms of assembly, monomer. The cofactor is Mg(2+). Expressed in roots, leaf vasculature, cauline leaves, flower buds and siliques.

It catalyses the reaction 1D-myo-inositol 1,3,4-trisphosphate + ATP = 1D-myo-inositol 1,3,4,5-tetrakisphosphate + ADP + H(+). It carries out the reaction 1D-myo-inositol 1,3,4-trisphosphate + ATP = 1D-myo-inositol 1,3,4,6-tetrakisphosphate + ADP + H(+). Functionally, kinase that can phosphorylate the inositol polyphosphate Ins(1,3,4)P3 to form InsP4. Also phosphorylates a racemic mixture of Ins(1,4,6)P3 and Ins(3,4,6)P3 to form InsP4. Does not display inositol 3,4,5,6-tetrakisphosphate 1-kinase activity, but possesses inositol 1,4,5,6-tetrakisphosphate and inositol 1,3,4,5-tetrakisphosphate isomerase activity. Ins(1,3,4,6)P4 is an essential molecule in the hexakisphosphate (InsP6) pathway. The chain is Inositol 1,3,4-trisphosphate 5/6-kinase 4 (ITPK4) from Arabidopsis thaliana (Mouse-ear cress).